The sequence spans 244 residues: Carboxy-S-adenosyl-L-methionine synthase (244 aa).

S-adenosyl-L-methionine is bound by residues tyrosine 40, 65–67 (GCS), 90–91 (DN), 119–120 (DI), asparagine 134, and arginine 201.

It belongs to the class I-like SAM-binding methyltransferase superfamily. Cx-SAM synthase family. In terms of assembly, homodimer.

It carries out the reaction prephenate + S-adenosyl-L-methionine = carboxy-S-adenosyl-L-methionine + 3-phenylpyruvate + H2O. Its function is as follows. Catalyzes the conversion of S-adenosyl-L-methionine (SAM) to carboxy-S-adenosyl-L-methionine (Cx-SAM). The chain is Carboxy-S-adenosyl-L-methionine synthase from Geobacter sp. (strain M21).